The chain runs to 227 residues: UPF0173 metal-dependent hydrolase DR_0006 (227 aa).

Belongs to the UPF0173 family.

This Deinococcus radiodurans (strain ATCC 13939 / DSM 20539 / JCM 16871 / CCUG 27074 / LMG 4051 / NBRC 15346 / NCIMB 9279 / VKM B-1422 / R1) protein is UPF0173 metal-dependent hydrolase DR_0006.